A 71-amino-acid polypeptide reads, in one-letter code: Protein SlyX homolog (71 aa).

This sequence belongs to the SlyX family.

This Stutzerimonas stutzeri (strain A1501) (Pseudomonas stutzeri) protein is Protein SlyX homolog.